A 155-amino-acid polypeptide reads, in one-letter code: MIRVGLGFDSHEFREGIPLRIGGLTIPHTHGLSGHSDGDVLLHAITDALLGAVAAGDIGAFFPPSDPKWKGANSVVFIEEAMRHIETAGYRVGNVDCSLVLNAPKIGPHAKAIQESVAKLLKIEPTAVGIKAKTPEGLNLDGTALAHVVVLLEKR.

A divalent metal cation is bound by residues D9 and H11. 4-CDP-2-C-methyl-D-erythritol 2-phosphate contacts are provided by residues 9 to 11 (DSH) and 35 to 36 (HS). H43 provides a ligand contact to a divalent metal cation. 57–59 (DIG) is a 4-CDP-2-C-methyl-D-erythritol 2-phosphate binding site.

It belongs to the IspF family. As to quaternary structure, homotrimer. It depends on a divalent metal cation as a cofactor.

It carries out the reaction 4-CDP-2-C-methyl-D-erythritol 2-phosphate = 2-C-methyl-D-erythritol 2,4-cyclic diphosphate + CMP. It functions in the pathway isoprenoid biosynthesis; isopentenyl diphosphate biosynthesis via DXP pathway; isopentenyl diphosphate from 1-deoxy-D-xylulose 5-phosphate: step 4/6. Functionally, involved in the biosynthesis of isopentenyl diphosphate (IPP) and dimethylallyl diphosphate (DMAPP), two major building blocks of isoprenoid compounds. Catalyzes the conversion of 4-diphosphocytidyl-2-C-methyl-D-erythritol 2-phosphate (CDP-ME2P) to 2-C-methyl-D-erythritol 2,4-cyclodiphosphate (ME-CPP) with a corresponding release of cytidine 5-monophosphate (CMP). The protein is 2-C-methyl-D-erythritol 2,4-cyclodiphosphate synthase of Koribacter versatilis (strain Ellin345).